The primary structure comprises 241 residues: Demethylmenaquinone methyltransferase (241 aa).

S-adenosyl-L-methionine is bound by residues T68, D88, and 114-115 (DA).

The protein belongs to the class I-like SAM-binding methyltransferase superfamily. MenG/UbiE family.

The catalysed reaction is a 2-demethylmenaquinol + S-adenosyl-L-methionine = a menaquinol + S-adenosyl-L-homocysteine + H(+). Its pathway is quinol/quinone metabolism; menaquinone biosynthesis; menaquinol from 1,4-dihydroxy-2-naphthoate: step 2/2. In terms of biological role, methyltransferase required for the conversion of demethylmenaquinol (DMKH2) to menaquinol (MKH2). The protein is Demethylmenaquinone methyltransferase of Deinococcus radiodurans (strain ATCC 13939 / DSM 20539 / JCM 16871 / CCUG 27074 / LMG 4051 / NBRC 15346 / NCIMB 9279 / VKM B-1422 / R1).